The sequence spans 139 residues: Nucleoside diphosphate kinase (139 aa).

Residues lysine 12, phenylalanine 60, arginine 88, threonine 94, arginine 105, and asparagine 115 each contribute to the ATP site. The active-site Pros-phosphohistidine intermediate is the histidine 118.

This sequence belongs to the NDK family. As to quaternary structure, homotetramer. Requires Mg(2+) as cofactor.

It localises to the cytoplasm. The catalysed reaction is a 2'-deoxyribonucleoside 5'-diphosphate + ATP = a 2'-deoxyribonucleoside 5'-triphosphate + ADP. It catalyses the reaction a ribonucleoside 5'-diphosphate + ATP = a ribonucleoside 5'-triphosphate + ADP. Its function is as follows. Major role in the synthesis of nucleoside triphosphates other than ATP. The ATP gamma phosphate is transferred to the NDP beta phosphate via a ping-pong mechanism, using a phosphorylated active-site intermediate. This Caldanaerobacter subterraneus subsp. tengcongensis (strain DSM 15242 / JCM 11007 / NBRC 100824 / MB4) (Thermoanaerobacter tengcongensis) protein is Nucleoside diphosphate kinase.